Reading from the N-terminus, the 815-residue chain is Probable AMP deaminase (815 aa).

Residues 5-27 (YALHLAVATLLGASFAAASAYYM) traverse the membrane as a helical segment. Disordered stretches follow at residues 53-116 (LLDA…PVPT) and 144-173 (LLTN…STNM). Positions 105 to 116 (VRPTTPRSPVPT) are enriched in low complexity. Residues 159–173 (ASQNGDTKPVPSTNM) show a composition bias toward polar residues. 2 residues coordinate Zn(2+): H367 and H369. Substrate-binding positions include H369 and 438 to 443 (KFNLKY). H635 contributes to the Zn(2+) binding site. Substrate is bound at residue E638. H657 acts as the Proton acceptor in catalysis. Residue D712 participates in Zn(2+) binding. Position 713-716 (713-716 (DPLQ)) interacts with substrate.

The protein belongs to the metallo-dependent hydrolases superfamily. Adenosine and AMP deaminases family. Homodimer. Zn(2+) serves as cofactor.

The protein resides in the membrane. It carries out the reaction AMP + H2O + H(+) = IMP + NH4(+). It participates in purine metabolism; IMP biosynthesis via salvage pathway; IMP from AMP: step 1/1. Functionally, AMP deaminase plays a critical role in energy metabolism. In Oryza sativa subsp. japonica (Rice), this protein is Probable AMP deaminase (AMPD).